We begin with the raw amino-acid sequence, 365 residues long: 7-methylxanthine methyltransferase PCS1 (365 aa).

Tyr19 contributes to the S-adenosyl-L-homocysteine binding site. Caffeine is bound at residue Thr26. Cys62, Asn67, Asp99, Leu100, Ser134, and Phe135 together coordinate S-adenosyl-L-homocysteine. Caffeine-binding residues include Tyr152, His155, and Trp156. Asn173 serves as a coordination point for Mg(2+). His221 is a caffeine binding site. Positions 259, 261, and 262 each coordinate Mg(2+). Phe317 is a caffeine binding site.

Belongs to the methyltransferase superfamily. Type-7 methyltransferase family. It depends on Mg(2+) as a cofactor.

It carries out the reaction 1,7-dimethylxanthine + S-adenosyl-L-methionine = caffeine + S-adenosyl-L-homocysteine + H(+). The enzyme catalyses 7-methylxanthine + S-adenosyl-L-methionine = theobromine + S-adenosyl-L-homocysteine + H(+). It participates in alkaloid biosynthesis. Its function is as follows. Involved in the biosynthesis of caffeine. Catalyzes the conversion of 7-methylxanthine (7mX) to theobromine, and, to some extent, the conversion of paraxanthine to caffeine, but seems not able to convert theobromine to caffeine. The protein is 7-methylxanthine methyltransferase PCS1 of Camellia ptilophylla (Cocoa tea).